The following is a 147-amino-acid chain: Sec-independent protein translocase protein TatB (147 aa).

A helical transmembrane segment spans residues 1–21 (MFDISFSEILVIAAVALIVIG). Residues 67-88 (EETGRSIENSVHTELDKFRETV) show a composition bias toward basic and acidic residues. The tract at residues 67-147 (EETGRSIENS…GVNRERETAE (81 aa)) is disordered. The span at 103-117 (APAGESSPPQNSSPA) shows a compositional bias: low complexity.

This sequence belongs to the TatB family. In terms of assembly, the Tat system comprises two distinct complexes: a TatABC complex, containing multiple copies of TatA, TatB and TatC subunits, and a separate TatA complex, containing only TatA subunits. Substrates initially bind to the TatABC complex, which probably triggers association of the separate TatA complex to form the active translocon.

It localises to the cell inner membrane. In terms of biological role, part of the twin-arginine translocation (Tat) system that transports large folded proteins containing a characteristic twin-arginine motif in their signal peptide across membranes. Together with TatC, TatB is part of a receptor directly interacting with Tat signal peptides. TatB may form an oligomeric binding site that transiently accommodates folded Tat precursor proteins before their translocation. This Nitrosospira multiformis (strain ATCC 25196 / NCIMB 11849 / C 71) protein is Sec-independent protein translocase protein TatB.